The chain runs to 202 residues: Ribosome maturation factor RimP (202 aa).

This sequence belongs to the RimP family.

It is found in the cytoplasm. Required for maturation of 30S ribosomal subunits. This chain is Ribosome maturation factor RimP, found in Paracidovorax citrulli (strain AAC00-1) (Acidovorax citrulli).